The chain runs to 517 residues: Tyrosine-protein kinase Src42A (517 aa).

Residues 1-47 (MGNCLTTQKGEPDKPADRIKLDDPPTIGVGVGVPQIPMPSHAGQPPE) form a disordered region. Basic and acidic residues predominate over residues 10 to 23 (GEPDKPADRIKLDD). Positions 63-124 (ANAKIFVALY…PSNYVAKLKS (62 aa)) constitute an SH3 domain. The SH2 domain maps to 130 to 222 (WYFRKIKRIE…GLCVNLCKPC (93 aa)). Residues 248–504 (LKFVRKLGSG…TLQWKLEDFY (257 aa)) enclose the Protein kinase domain. Residues 254-262 (LGSGQFGDV) and Lys-276 each bind ATP. The active-site Proton acceptor is the Asp-370.

Belongs to the protein kinase superfamily. Tyr protein kinase family. SRC subfamily. As to expression, ubiquitous in early embryos, in stages 13-16 expression is seen in visceral mesoderm, hindgut, brain, anal pads and ventral ganglions. In larvae, expression is in CNS, wing disk, leg disk and photoreceptor precursors in the eye-antenna disks posterior to the morphogenetic furrow.

It carries out the reaction L-tyrosyl-[protein] + ATP = O-phospho-L-tyrosyl-[protein] + ADP + H(+). Functionally, required directly or indirectly for the phosphorylation of drpr which is necessary for the interaction of drpr with shark and subsequent glial phagocytic activity. Together with drpr and shark, promotes the migration of macrophages to sites of wounding as part of a signaling cascade where Src42A detects production of hydrogen peroxide at wound sites which triggers phosphorylation of drpr and subsequent recruitment and activation of shark. Essential for correct eye morphogenesis (ommatidial R7 neuron formation) which requires the Ras1/MAPK signal transduction pathway. May be involved in the regulation of cytoskeleton organization and cell-cell contacts in developing ommatidia. Involved in phosphorylation of Dscam1, a cell surface receptor involved in targeting of growing axons during eye morphogenesis, and its interaction partner the SH2/SH3 adapter protein dock/dreadlocks. During embryogenesis, involved in regulation of dorsal closure where it may have a role in activating the JNK pathway in leading edge cells during this process. The chain is Tyrosine-protein kinase Src42A from Drosophila melanogaster (Fruit fly).